The primary structure comprises 298 residues: Foldase protein PrsA 1 (298 aa).

An N-terminal signal peptide occupies residues 1-23 (MNKTWKKAATVLAFAGIALSATA). The N-palmitoyl cysteine moiety is linked to residue Cys-24. Cys-24 carries S-diacylglycerol cysteine lipidation. Residues 141–234 (QPEVTVQHIL…YGYHVIKMIK (94 aa)) enclose the PpiC domain.

The protein belongs to the PrsA family.

The protein localises to the cell membrane. The enzyme catalyses [protein]-peptidylproline (omega=180) = [protein]-peptidylproline (omega=0). In terms of biological role, plays a major role in protein secretion by helping the post-translocational extracellular folding of several secreted proteins. The protein is Foldase protein PrsA 1 (prsA1) of Lactobacillus johnsonii (strain CNCM I-12250 / La1 / NCC 533).